The chain runs to 95 residues: Ubiquinol-cytochrome-c reductase complex assembly factor 3 (95 aa).

The Mitochondrial matrix segment spans residues 1 to 7; the sequence is MTTLRKL. The chain crosses the membrane as a helical span at residues 8–28; sequence LLVGALLGAGAGVGTALFALV. Residues 23-80 are mediates lipid-binding; it reads ALFALVTPGEERKQAMLKEMPEQYPQRRDEAARTKELLLATLQEAAATQENVAWRKNW. At 29 to 95 the chain is on the mitochondrial intermembrane side; sequence TPGEERKQAM…GGGGGGGRSA (67 aa).

It belongs to the UQCC3 family. In terms of assembly, associates with the ubiquinol-cytochrome c reductase complex (mitochondrial respiratory chain complex III(CIII) or cytochrome b-c1 complex). Interacts with UQCC1. Forms a complex, named COMC, composed of UQCC1, UQCC2; UQCC3 and UQCC4; mediates MT-CYB hemylation and association with the first nuclear-encoded complex III subunit UQCRQ. In terms of processing, probably cleaved by OMA1 under mitochondrial stress conditions.

The protein localises to the mitochondrion inner membrane. Functionally, required for the assembly of the ubiquinol-cytochrome c reductase complex (mitochondrial respiratory chain complex III or cytochrome b-c1 complex), mediating cytochrome b recruitment and probably stabilization within the complex. Thereby, plays an important role in ATP production by mitochondria. Cardiolipin-binding protein, it may also control the cardiolipin composition of mitochondria membranes and their morphology. This is Ubiquinol-cytochrome-c reductase complex assembly factor 3 from Bos taurus (Bovine).